The primary structure comprises 1137 residues: Nonsense-mediated mRNA decay factor SMG7 (1137 aa).

Ser-2 is modified (N-acetylserine). TPR repeat units follow at residues 152–185 and 187–219; these read QHCLVHLGDIARYRNQTSQAESYYRHAAQLVPSN and QPYNQLAILASSKGDHLTTIFYYCRSIAVKFPF. A Phosphoserine modification is found at Ser-520. Over residues 620-631 the composition is skewed to basic and acidic residues; the sequence is ELRKTPVSEARK. Disordered stretches follow at residues 620–646, 696–794, 890–911, 988–1055, 1069–1089, and 1104–1137; these read ELRKTPVSEARKTPVTQTPTQASNSQF, LQPT…YQQA, IDRRGKRSPGVFRPEQDPVPRM, PSLP…AMGG, SSWHQASTPSGTWTGHGPSME, and SSSMMHPGPSALEQLLMQQKQKQQRGQGTMNPPH. Position 624 is a phosphothreonine (Thr-624). Composition is skewed to polar residues over residues 633–646 and 696–722; these read PVTQTPTQASNSQF and LQPTAHSPAGNQVQAGKQSHIPYSQQR. Over residues 723 to 770 the composition is skewed to low complexity; sequence PSGPGPMNQGPQQSQPPSQQPLTSLPAQPTAQSTSQLQVQALTQQQQS. Phosphoserine is present on residues Ser-781 and Ser-897. The span at 988–998 shows a compositional bias: polar residues; that stretch reads PSLPASSDHST. The segment covering 999-1025 has biased composition (low complexity); it reads PASQSPHSSNPSSLPSSPPTHNHNSVP. Residues 1036–1050 are compositionally biased toward basic and acidic residues; that stretch reads DNRDRRTADRWKTDK. The span at 1069-1081 shows a compositional bias: polar residues; sequence SSWHQASTPSGTW. Residues 1117 to 1131 show a composition bias toward low complexity; sequence QLLMQQKQKQQRGQG.

As to quaternary structure, part of a complex that contains SMG5, SMG7, PPP2CA, a short isoform of UPF3A (isoform UPF3AS, but not isoform UPF3AL) and phosphorylated UPF1. Interacts with DHX34; the interaction is RNA-independent.

The protein localises to the cytoplasm. It localises to the nucleus. Plays a role in nonsense-mediated mRNA decay. Recruits UPF1 to cytoplasmic mRNA decay bodies. Together with SMG5 is thought to provide a link to the mRNA degradation machinery involving exonucleolytic pathways, and to serve as an adapter for UPF1 to protein phosphatase 2A (PP2A), thereby triggering UPF1 dephosphorylation. This is Nonsense-mediated mRNA decay factor SMG7 from Homo sapiens (Human).